The sequence spans 437 residues: Trigger factor (437 aa).

In terms of domain architecture, PPIase FKBP-type spans 161 to 246 (DDQVNIDFVG…VNSVSAPQLP (86 aa)).

Belongs to the FKBP-type PPIase family. Tig subfamily.

It localises to the cytoplasm. The catalysed reaction is [protein]-peptidylproline (omega=180) = [protein]-peptidylproline (omega=0). Functionally, involved in protein export. Acts as a chaperone by maintaining the newly synthesized protein in an open conformation. Functions as a peptidyl-prolyl cis-trans isomerase. This is Trigger factor from Pseudomonas putida (strain W619).